The chain runs to 251 residues: Ribonuclease PH (251 aa).

Phosphate is bound by residues R87 and 125-127 (GTR).

The protein belongs to the RNase PH family. Homohexameric ring arranged as a trimer of dimers.

The enzyme catalyses tRNA(n+1) + phosphate = tRNA(n) + a ribonucleoside 5'-diphosphate. In terms of biological role, phosphorolytic 3'-5' exoribonuclease that plays an important role in tRNA 3'-end maturation. Removes nucleotide residues following the 3'-CCA terminus of tRNAs; can also add nucleotides to the ends of RNA molecules by using nucleoside diphosphates as substrates, but this may not be physiologically important. Probably plays a role in initiation of 16S rRNA degradation (leading to ribosome degradation) during starvation. The protein is Ribonuclease PH of Saccharopolyspora erythraea (strain ATCC 11635 / DSM 40517 / JCM 4748 / NBRC 13426 / NCIMB 8594 / NRRL 2338).